The following is a 333-amino-acid chain: Procathepsin L (333 aa).

Positions 1-17 (MNPTFILAALCLGIASA) are cleaved as a signal peptide. A propeptide spans 18-113 (TLTFNHSLEA…KVFQEPLFYE (96 aa)) (activation peptide). Glu-122 serves as a coordination point for Zn(2+). Intrachain disulfides connect Cys-135-Cys-178 and Cys-169-Cys-211. Residue Cys-138 is part of the active site. Positions 163, 184, 199, 205, 209, 227, 250, 253, 273, and 275 each coordinate Zn(2+). Cysteines 269 and 322 form a disulfide. The active site involves His-276. Residues 289–291 (ESD) constitute a propeptide that is removed on maturation. The active site involves Asn-300.

Belongs to the peptidase C1 family. Dimer of a heavy and a light chain linked by disulfide bonds. Interacts with Long isoform of CD74/Ii chain; the interaction stabilizes the conformation of mature CTSL. Post-translationally, during export along the endocytic pathway, pro-CTSL undergoes several proteolytic cleavages to generate the CTSL single-chain and two-chain mature forms, composed of a heavy chain linked to a light chain by disulfide bonds. Autocleavage; produces the single-chain CTSL after cleavage of the propeptide. The cleavage can be intermolecular.

It is found in the lysosome. Its subcellular location is the apical cell membrane. It localises to the cytoplasmic vesicle. The protein localises to the secretory vesicle. The protein resides in the chromaffin granule. It is found in the secreted. Its subcellular location is the extracellular space. The catalysed reaction is Specificity close to that of papain. As compared to cathepsin B, cathepsin L exhibits higher activity toward protein substrates, but has little activity on Z-Arg-Arg-NHMec, and no peptidyl-dipeptidase activity.. Its activity is regulated as follows. Inhibited by the propeptide produced by autocleavage. Long isoform of CD74/Ii chain stabilizes the conformation of mature CTSL by binding to its active site and serving as a chaperone to help maintain a pool of mature enzyme in endocytic compartments and extracellular space of APCs. IFNG enhances the conversion into the CTSL mature and active form. Inhibited by CST6. Inhibited by the glycopeptide antibiotic teicoplanin. Inhibited by amantadine. In terms of biological role, thiol protease important for the overall degradation of proteins in lysosomes. Plays a critical for normal cellular functions such as general protein turnover, antigen processing and bone remodeling. Involved in the solubilization of cross-linked TG/thyroglobulin and in the subsequent release of thyroid hormone thyroxine (T4) by limited proteolysis of TG/thyroglobulin in the thyroid follicle lumen. In neuroendocrine chromaffin cells secretory vesicles, catalyzes the prohormone proenkephalin processing to the active enkephalin peptide neurotransmitter. In thymus, regulates CD4(+) T cell positive selection by generating the major histocompatibility complex class II (MHCII) bound peptide ligands presented by cortical thymic epithelial cells. Also mediates invariant chain processing in cortical thymic epithelial cells. Major elastin-degrading enzyme at neutral pH. Accumulates as a mature and active enzyme in the extracellular space of antigen presenting cells (APCs) to regulate degradation of the extracellular matrix in the course of inflammation. Secreted form generates endostatin from COL18A1. Critical for cardiac morphology and function. Plays an important role in hair follicle morphogenesis and cycling, as well as epidermal differentiation. Required for maximal stimulation of steroidogenesis by TIMP1. In Chlorocebus aethiops (Green monkey), this protein is Procathepsin L (CTSL).